The primary structure comprises 196 residues: MSQRSAAVFRETKETSIRLDLVVDGQGLVNVHTGFGMADHVITLAAFWAGFDLTLSCTGDLEIDAHHTVEDVGLCLGQALAEALGERSGIARVGFARVPMDEALADVCIDISGRPWLEWRGDDLLPPVIAGQERDLWREFLKAFASAARMNLHVSFLYGRNGHHLLESAAKGLGLALRQAVRRDRETLLSTKGSLD.

It belongs to the imidazoleglycerol-phosphate dehydratase family.

It localises to the cytoplasm. The catalysed reaction is D-erythro-1-(imidazol-4-yl)glycerol 3-phosphate = 3-(imidazol-4-yl)-2-oxopropyl phosphate + H2O. It participates in amino-acid biosynthesis; L-histidine biosynthesis; L-histidine from 5-phospho-alpha-D-ribose 1-diphosphate: step 6/9. The polypeptide is Imidazoleglycerol-phosphate dehydratase (Nitratidesulfovibrio vulgaris (strain DSM 19637 / Miyazaki F) (Desulfovibrio vulgaris)).